The sequence spans 396 residues: Na(+)/H(+) antiporter NhaA 2 (396 aa).

A run of 11 helical transmembrane segments spans residues 17 to 37 (LSGL…NSDF), 62 to 82 (LLHW…GLEI), 98 to 118 (SFPI…YISL), 125 to 145 (GFGV…MLLG), 154 to 174 (LFLV…VAIF), 179 to 199 (LHFE…FLNY), 209 to 229 (IILG…STIA), 268 to 288 (FSAF…IIDF), 296 to 316 (LIVL…IFSF), 337 to 357 (IFAV…ISHL), and 368 to 388 (VKLG…VLLI).

This sequence belongs to the NhaA Na(+)/H(+) (TC 2.A.33) antiporter family.

The protein resides in the cell inner membrane. The enzyme catalyses Na(+)(in) + 2 H(+)(out) = Na(+)(out) + 2 H(+)(in). Functionally, na(+)/H(+) antiporter that extrudes sodium in exchange for external protons. This is Na(+)/H(+) antiporter NhaA 2 from Aliarcobacter butzleri (strain RM4018) (Arcobacter butzleri).